Reading from the N-terminus, the 809-residue chain is Trimethylamine-N-oxide reductase 2 (809 aa).

The tat-type signal signal peptide spans 1–31 (MTLTRREFIKHSGIAAGALVVTSAAPLPAWA). S176 provides a ligand contact to Mo-bis(molybdopterin guanine dinucleotide).

The protein belongs to the prokaryotic molybdopterin-containing oxidoreductase family. Mo-bis(molybdopterin guanine dinucleotide) is required as a cofactor. Post-translationally, predicted to be exported by the Tat system. The position of the signal peptide cleavage has not been experimentally proven.

It localises to the periplasm. It carries out the reaction trimethylamine + 2 Fe(III)-[cytochrome c] + H2O = trimethylamine N-oxide + 2 Fe(II)-[cytochrome c] + 3 H(+). In terms of biological role, reduces trimethylamine-N-oxide (TMAO) into trimethylamine; an anaerobic reaction coupled to energy-yielding reactions. Can also reduce other N- and S-oxide compounds such as 4-methylmorpholine-N-oxide and biotin sulfoxide (BSO), but with a lower catalytic efficiency. This chain is Trimethylamine-N-oxide reductase 2 (torZ), found in Escherichia coli O157:H7.